The chain runs to 140 residues: uncharacterized protein (140 aa).

A VOC domain is found at 4–127 (TLTHLALHVP…AGNYVEFSYG (124 aa)).

This is an uncharacterized protein from Pseudomonas aeruginosa (strain ATCC 15692 / DSM 22644 / CIP 104116 / JCM 14847 / LMG 12228 / 1C / PRS 101 / PAO1).